The primary structure comprises 167 residues: Menaquinol:cytochrome c reductase iron-sulfur subunit (167 aa).

The 100-residue stretch at 59–158 (TKEPQRFDFK…QEVKDGFLYL (100 aa)) folds into the Rieske domain. Residues C100, H102, C121, and H124 each coordinate [2Fe-2S] cluster. C105 and C123 form a disulfide bridge.

The protein belongs to the Rieske iron-sulfur protein family. As to quaternary structure, the main subunits of the menaquinol:cytochrome c complex are a Rieske-type iron-sulfur protein (QcrA), a cytochrome b (QcrB) and a cytochrome c (QcrC). It depends on [2Fe-2S] cluster as a cofactor.

Its function is as follows. Component of the menaquinol:cytochrome c reductase complex. The Rieske protein is a high potential 2Fe-2S protein. This is Menaquinol:cytochrome c reductase iron-sulfur subunit (qcrA) from Bacillus subtilis (strain 168).